The following is a 308-amino-acid chain: UPF0282 protein STK_23220 (308 aa).

This sequence belongs to the UPF0282 family.

In Sulfurisphaera tokodaii (strain DSM 16993 / JCM 10545 / NBRC 100140 / 7) (Sulfolobus tokodaii), this protein is UPF0282 protein STK_23220.